A 541-amino-acid polypeptide reads, in one-letter code: NAD(P)H-quinone oxidoreductase subunit 2 A, chloroplastic (541 aa).

14 helical membrane-spanning segments follow: residues 24-44, 57-77, 99-119, 124-144, 149-169, 183-203, 227-247, 289-309, 326-346, 354-374, 385-405, 426-446, 449-469, and 515-535; these read LLLFDGSLIFPECILIFGLIL, IPWLYFIPSTSLVMSITALLF, IFQFLILLCSTLCIPLSVEYI, MAITEFLLFVLTATLGGMFLC, FITIFVAPECFSLCSYLLSGY, YLLMGGASSSILVHGFSWLYG, PGISIALIFITVGIGFKLSPA, ILSPTPVVAFLSVTSKVAASA, WHLLLEILAILSMILGNLIAI, MLAYSSIGQIGYVIIGIIVGD, YMLFYISMNLGTFACIVLFGL, ALSLALCLLSLGGLPPLAGFF, LYLFWCGWQAGLYFLVLIGLL, and MIVCVIASTIPGISMNPIIAI.

It belongs to the complex I subunit 2 family. NDH is composed of at least 16 different subunits, 5 of which are encoded in the nucleus.

The protein localises to the plastid. Its subcellular location is the chloroplast thylakoid membrane. The catalysed reaction is a plastoquinone + NADH + (n+1) H(+)(in) = a plastoquinol + NAD(+) + n H(+)(out). It catalyses the reaction a plastoquinone + NADPH + (n+1) H(+)(in) = a plastoquinol + NADP(+) + n H(+)(out). In terms of biological role, NDH shuttles electrons from NAD(P)H:plastoquinone, via FMN and iron-sulfur (Fe-S) centers, to quinones in the photosynthetic chain and possibly in a chloroplast respiratory chain. The immediate electron acceptor for the enzyme in this species is believed to be plastoquinone. Couples the redox reaction to proton translocation, and thus conserves the redox energy in a proton gradient. The chain is NAD(P)H-quinone oxidoreductase subunit 2 A, chloroplastic from Coffea arabica (Arabian coffee).